Consider the following 811-residue polypeptide: N-terminal acetyltransferase B complex subunit arm1 (811 aa).

Belongs to the MDM20/NAA25 family. As to quaternary structure, component of the N-terminal acetyltransferase B (NatB) complex.

The protein resides in the cytoplasm. Non-catalytic subunit of the NatB N-terminal acetyltransferase, which catalyzes acetylation of the amino-terminal methionine residues of all proteins beginning with Met-Asp or Met-Glu and of some proteins beginning with Met-Asn or Met-Met. The sequence is that of N-terminal acetyltransferase B complex subunit arm1 (arm1) from Schizosaccharomyces pombe (strain 972 / ATCC 24843) (Fission yeast).